The sequence spans 218 residues: Ropporin-1-like protein (218 aa).

The region spanning 17-54 (PELPDILKQFTKAAIRTQPADVLQWSAGYFSALSRGDP) is the RIIa domain.

Belongs to the ropporin family. Component of the axonemal radial spoke complex 1 (RS1), at least composed of spoke head proteins RSPH1, RSPH3, RSPH9 and the cilia-specific component RSPH4A or sperm-specific component RSPH6A, spoke stalk proteins RSPH14, DNAJB13, DYDC1, ROPN1L and NME5, and the anchor protein IQUB. May interact with AKAP3. Interacts with FSCB; the interaction increases upon spermatozoa capacitation conditions. Interacts with CFAP61. Post-translationally, sumoylated, sumoylation decreases upon spermatozoa capacitation conditions. As to expression, testis-specific. Expression is restricted to germ cells.

The protein localises to the cell projection. The protein resides in the cilium. It is found in the flagellum. In terms of biological role, functions as part of axonemal radial spoke complexes that play an important part in the motility of sperm and cilia. Important for male fertility. With ROPN1, involved in fibrous sheath integrity and sperm motility, plays a role in PKA-dependent signaling processes required for spermatozoa capacitation. This chain is Ropporin-1-like protein (Ropn1l), found in Mus musculus (Mouse).